A 223-amino-acid polypeptide reads, in one-letter code: UPF0441 protein YgiB (223 aa).

Residues 178 to 195 (TVPKTAMAPKPATTTTVT) show a composition bias toward low complexity. The disordered stretch occupies residues 178 to 223 (TVPKTAMAPKPATTTTVTRGGFGESVAKQSTMQRSAAGTSTRSMGG). Positions 204 to 223 (AKQSTMQRSAAGTSTRSMGG) are enriched in polar residues.

This sequence belongs to the UPF0441 family.

This chain is UPF0441 protein YgiB, found in Salmonella enteritidis PT4 (strain P125109).